The primary structure comprises 239 residues: EF-hand domain-containing protein D1 (239 aa).

The segment covering 1–18 has biased composition (basic and acidic residues); that stretch reads MASEELACKLERRLRREE. Residues 1–53 are disordered; the sequence is MASEELACKLERRLRREEAEESGPQLAPLGAPAPEPKPEPEPPARAPTASADA. 2 EF-hand domains span residues 90-125 and 126-161; these read RLIK…LGAP and QTHL…AAAG. Ca(2+) is bound by residues Asp103, Asp107, Glu114, Asp139, Asp141, Asp143, Lys145, and Glu150. Phosphoserine is present on Ser201.

Its subcellular location is the mitochondrion inner membrane. In terms of biological role, acts as a calcium sensor for mitochondrial flash (mitoflash) activation, an event characterized by stochastic bursts of superoxide production. May play a role in neuronal differentiation. This chain is EF-hand domain-containing protein D1 (EFHD1), found in Homo sapiens (Human).